A 218-amino-acid chain; its full sequence is MRRLNGVFICLILFITKISYAKDKGANGDMVNIVAFGEGRCSDTSYWMKWHWLPMWRMLGSTGRINFDYHPYGIKTTCVDSESADDVVCDCHHGNRECLLNQLQACVIEALPNFEDYMEVVTCIQGKQNISMAAEVCFEGPTKLDRTKMMECAESRHGRKLFSDQENIVAQMAPEMDWAPWILINGTRYKEAEEDLWQFLCDRFIDPRPIHCPKKIVY.

A signal peptide spans 1–21; the sequence is MRRLNGVFICLILFITKISYA. N-linked (GlcNAc...) asparagine glycans are attached at residues asparagine 129 and asparagine 185.

The protein belongs to the GILT family.

The protein localises to the secreted. This chain is GILT-like protein ZK669.3, found in Caenorhabditis elegans.